The sequence spans 886 residues: Translation initiation factor IF-2 (886 aa).

3 disordered regions span residues 1 to 25, 50 to 229, and 253 to 272; these read MSET…LKRP, RRAL…PAEE, and KGAE…TGDE. Residues 50 to 60 show a composition bias toward basic and acidic residues; the sequence is RRALGEPHVLR. Residues 63 to 73 show a composition bias toward low complexity; the sequence is APALDVVAPAP. The segment covering 74–83 has biased composition (pro residues); sequence QAAPPAPTQQ. Low complexity predominate over residues 84 to 106; sequence PQPRVASRPQPQQRSSSGVILRS. Basic and acidic residues predominate over residues 107 to 181; that stretch reads LTEEEREARS…KRRSESEAKR (75 aa). The span at 185 to 225 shows a compositional bias: low complexity; sequence GGEPAPAGANAAPRKAPALSAAPGSAAPSGQPGPAGAVGAR. A tr-type G domain is found at 383–553; sequence SRPPVVTIMG…ALQAELLDLK (171 aa). A G1 region spans residues 392–399; it reads GHVDHGKT. Residue 392–399 coordinates GTP; sequence GHVDHGKT. The segment at 417–421 is G2; the sequence is GITQH. The G3 stretch occupies residues 439 to 442; the sequence is DTPG. GTP contacts are provided by residues 439–443 and 493–496; these read DTPGH and NKID. The tract at residues 493 to 496 is G4; sequence NKID. The interval 529–531 is G5; that stretch reads SAT.

This sequence belongs to the TRAFAC class translation factor GTPase superfamily. Classic translation factor GTPase family. IF-2 subfamily.

It is found in the cytoplasm. In terms of biological role, one of the essential components for the initiation of protein synthesis. Protects formylmethionyl-tRNA from spontaneous hydrolysis and promotes its binding to the 30S ribosomal subunits. Also involved in the hydrolysis of GTP during the formation of the 70S ribosomal complex. This Methylocella silvestris (strain DSM 15510 / CIP 108128 / LMG 27833 / NCIMB 13906 / BL2) protein is Translation initiation factor IF-2.